Reading from the N-terminus, the 51-residue chain is Large ribosomal subunit protein eL39 (51 aa).

A disordered region spans residues 32–51; that stretch reads KGSVKQHPKMRHWRRNTLKK. Residues 33-51 are compositionally biased toward basic residues; that stretch reads GSVKQHPKMRHWRRNTLKK.

Belongs to the eukaryotic ribosomal protein eL39 family.

The chain is Large ribosomal subunit protein eL39 from Methanococcus vannielii (strain ATCC 35089 / DSM 1224 / JCM 13029 / OCM 148 / SB).